The primary structure comprises 120 residues: Glycine cleavage system H protein (120 aa).

The region spanning 20 to 102 is the Lipoyl-binding domain; that stretch reads DGTVGISDHA…YEGGWLFKLD (83 aa). Lys-61 carries the post-translational modification N6-lipoyllysine.

It belongs to the GcvH family. In terms of assembly, the glycine cleavage system is composed of four proteins: P, T, L and H. It depends on (R)-lipoate as a cofactor.

The glycine cleavage system catalyzes the degradation of glycine. The H protein shuttles the methylamine group of glycine from the P protein to the T protein. The polypeptide is Glycine cleavage system H protein (Deinococcus radiodurans (strain ATCC 13939 / DSM 20539 / JCM 16871 / CCUG 27074 / LMG 4051 / NBRC 15346 / NCIMB 9279 / VKM B-1422 / R1)).